The chain runs to 191 residues: Pentapeptide repeat protein MfpA (191 aa).

Residues 115 to 154 (CRLREVSLVGADLRKAVLRRADLTGSRVQDARLEEADLRG) form the Pentapeptide repeat domain.

This sequence belongs to the pentapeptide repeat protein family. In terms of assembly, homodimer. Probably interacts with DNA gyrase.

When present on multicopy plasmids confers increased resistance to fluoroquinolone antibiotics such as ciprofloxacin and sparfloxacin but not the quinolone nalidixic acid. Forms a structure that exhibits size, shape and electrostatic similarity to B-form DNA; it may bind to DNA gyrase which is postulated to protect it from fluoroquinolones. In Mycolicibacterium smegmatis (strain ATCC 700084 / mc(2)155) (Mycobacterium smegmatis), this protein is Pentapeptide repeat protein MfpA.